The sequence spans 82 residues: Modifier of protein aggregation 4 (82 aa).

Residues 1–23 show a composition bias toward basic and acidic residues; it reads MTRGNQRDLAREKNQKKLADQKK. Disordered stretches follow at residues 1-41 and 63-82; these read MTRG…MDAR and EAAAAAANAKKVAKVDPLKM.

This sequence belongs to the SERF family.

The protein resides in the cytoplasm. It localises to the cytosol. The protein localises to the nucleus. In terms of biological role, positive regulator of protein aggregation and age-related proteotoxicity. Induces conformational changes in aggregation-prone proteins, driving them into compact formations preceding the formation of aggregates. The sequence is that of Modifier of protein aggregation 4 from Caenorhabditis elegans.